Consider the following 220-residue polypeptide: 2-hydroxy-3-keto-5-methylthiopentenyl-1-phosphate phosphatase (220 aa).

It belongs to the HAD-like hydrolase superfamily. MtnX family.

It carries out the reaction 2-hydroxy-5-methylsulfanyl-3-oxopent-1-enyl phosphate + H2O = 1,2-dihydroxy-5-(methylsulfanyl)pent-1-en-3-one + phosphate. It participates in amino-acid biosynthesis; L-methionine biosynthesis via salvage pathway; L-methionine from S-methyl-5-thio-alpha-D-ribose 1-phosphate: step 4/6. Dephosphorylates 2-hydroxy-3-keto-5-methylthiopentenyl-1-phosphate (HK-MTPenyl-1-P) yielding 1,2-dihydroxy-3-keto-5-methylthiopentene (DHK-MTPene). The sequence is that of 2-hydroxy-3-keto-5-methylthiopentenyl-1-phosphate phosphatase from Geobacillus kaustophilus (strain HTA426).